The chain runs to 370 residues: Anhydro-N-acetylmuramic acid kinase (370 aa).

12–19 is a binding site for ATP; it reads GTSLDGVD.

This sequence belongs to the anhydro-N-acetylmuramic acid kinase family.

The enzyme catalyses 1,6-anhydro-N-acetyl-beta-muramate + ATP + H2O = N-acetyl-D-muramate 6-phosphate + ADP + H(+). It participates in amino-sugar metabolism; 1,6-anhydro-N-acetylmuramate degradation. Its pathway is cell wall biogenesis; peptidoglycan recycling. Its function is as follows. Catalyzes the specific phosphorylation of 1,6-anhydro-N-acetylmuramic acid (anhMurNAc) with the simultaneous cleavage of the 1,6-anhydro ring, generating MurNAc-6-P. Is required for the utilization of anhMurNAc either imported from the medium or derived from its own cell wall murein, and thus plays a role in cell wall recycling. This is Anhydro-N-acetylmuramic acid kinase from Pectobacterium atrosepticum (strain SCRI 1043 / ATCC BAA-672) (Erwinia carotovora subsp. atroseptica).